A 1273-amino-acid polypeptide reads, in one-letter code: Cullin-associated NEDD8-dissociated protein 2 (1273 aa).

The residue at position 2 (Ser-2) is an N-acetylserine. HEAT repeat units lie at residues 2-36, 37-74, 82-119, 121-157, 167-205, 209-246, 248-284, 292-329, 364-405, 409-446, 469-506, 554-591, 602-641, 685-722, 727-764, 768-807, 809-850, 894-931, 933-968, 970-1003, 1004-1040, 1044-1081, 1085-1121, 1142-1178, 1194-1231, and 1241-1273; these read STGAFYISSLLEKMTSSDKDFSPKSLGGSRVLDPL, PWLQILAAITDWISGDRTQDLALPRFMATSDLMSELQK, DSERKVVRTLLRLLEDRSGEVQNLAVKCLGPLVGKVKE, QVENIVDTLCANMRSDKEQLRDIAGIGLKTVLSELPP, SVCRKITGQLTSAIAQQEDVAVQLEALDILSDMLSRLGA, TFHASLLHCLLPQLSSPRLAVRKRTVVALGHLAAACST, LFVELADHLVDRLPGPRAPASPAAIRTLIQCLGSVGR, AHLDRLMPLVEEFCNLDDDELRESCLQAFEAFLRKCPK, TEDS…SRPD, DFHCTLAPALIRCFKEREENVKADIFGAYIMLLRHTRP, AQVPLVMKALQRQLKDRNVRTRQGCFNLFTELAGVLPG, PHLPTLLPPVMACVADPFYKVAAEALLVLQELVRTLWP, PYVGEMSTATLARLRATDLDQEVKERAISCVGHLVGHLGD, PILAEALPILASFLRKNQRALRLATLAALDALAQSQGL, PAVRSVLAELPALVSENDMHVAQLAVDFLTTVTQTQPA, EVSGPVLEELLQLLHSPLLPAGVLAATEGFLQALVGTRPP, VEYS…ALSA, GPQRELKTVLLEALGSPSEDVRAAAAYALGRVGAGNLP, FLPFLLAQIEAQPRRQYLLLHALREALGAAQPDNLK, YVEDVWALLFQRCESPEEGTRCVVAECIGKLVFV, NPPFLLPRFRKQLAAGQPYTRSTVITAVKFLISDQPH, PLLKSFIAEFMESLQDPDLNVRRATLTFFNSAVHNKPS, DLLDDILPLLYQETKIRRDLIREVEMGPFKHTVDDGL, LDICEFLNHVEDGLKDHYDIRMLTFIMLARLAALCPA, TCTAKVKAGSVKQELEKQDELKRSAMRAVAALMTNPEV, and STQIRSNPELATLFESIQKDTASGPSMDSMELS. The interval 352–383 is disordered; that stretch reads YNHDSDEEEQMETEDSEFSEQESEDEYSDDDD. The segment covering 356 to 383 has biased composition (acidic residues); sequence SDEEEQMETEDSEFSEQESEDEYSDDDD.

Belongs to the CAND family. Binds TBP, CNOT3 and UBE3C. In terms of processing, ubiquitinated and targeted for proteasomal degradation. As to expression, detected in heart and skeletal muscle.

It localises to the nucleus. Functionally, probable assembly factor of SCF (SKP1-CUL1-F-box protein) E3 ubiquitin ligase complexes that promotes the exchange of the substrate-recognition F-box subunit in SCF complexes, thereby playing a key role in the cellular repertoire of SCF complexes. This chain is Cullin-associated NEDD8-dissociated protein 2 (Cand2), found in Rattus norvegicus (Rat).